The following is a 373-amino-acid chain: 4-hydroxy-3-methylbut-2-en-1-yl diphosphate synthase (flavodoxin) (373 aa).

The [4Fe-4S] cluster site is built by C270, C273, C305, and E312.

The protein belongs to the IspG family. [4Fe-4S] cluster serves as cofactor.

It catalyses the reaction (2E)-4-hydroxy-3-methylbut-2-enyl diphosphate + oxidized [flavodoxin] + H2O + 2 H(+) = 2-C-methyl-D-erythritol 2,4-cyclic diphosphate + reduced [flavodoxin]. The protein operates within isoprenoid biosynthesis; isopentenyl diphosphate biosynthesis via DXP pathway; isopentenyl diphosphate from 1-deoxy-D-xylulose 5-phosphate: step 5/6. In terms of biological role, converts 2C-methyl-D-erythritol 2,4-cyclodiphosphate (ME-2,4cPP) into 1-hydroxy-2-methyl-2-(E)-butenyl 4-diphosphate. The polypeptide is 4-hydroxy-3-methylbut-2-en-1-yl diphosphate synthase (flavodoxin) (Proteus mirabilis (strain HI4320)).